Reading from the N-terminus, the 132-residue chain is ATP synthase epsilon chain (132 aa).

This sequence belongs to the ATPase epsilon chain family. F-type ATPases have 2 components, CF(1) - the catalytic core - and CF(0) - the membrane proton channel. CF(1) has five subunits: alpha(3), beta(3), gamma(1), delta(1), epsilon(1). CF(0) has three main subunits: a, b and c.

The protein resides in the cell inner membrane. In terms of biological role, produces ATP from ADP in the presence of a proton gradient across the membrane. The polypeptide is ATP synthase epsilon chain (Jannaschia sp. (strain CCS1)).